Here is a 474-residue protein sequence, read N- to C-terminus: ATP synthase subunit beta (474 aa).

153–160 contributes to the ATP binding site; sequence GGAGVGKT.

It belongs to the ATPase alpha/beta chains family. F-type ATPases have 2 components, CF(1) - the catalytic core - and CF(0) - the membrane proton channel. CF(1) has five subunits: alpha(3), beta(3), gamma(1), delta(1), epsilon(1). CF(0) has three main subunits: a(1), b(2) and c(9-12). The alpha and beta chains form an alternating ring which encloses part of the gamma chain. CF(1) is attached to CF(0) by a central stalk formed by the gamma and epsilon chains, while a peripheral stalk is formed by the delta and b chains.

It localises to the cell inner membrane. The enzyme catalyses ATP + H2O + 4 H(+)(in) = ADP + phosphate + 5 H(+)(out). Functionally, produces ATP from ADP in the presence of a proton gradient across the membrane. The catalytic sites are hosted primarily by the beta subunits. This chain is ATP synthase subunit beta, found in Rickettsia typhi (strain ATCC VR-144 / Wilmington).